We begin with the raw amino-acid sequence, 62 residues long: Photosystem II reaction center protein Z (62 aa).

Helical transmembrane passes span 8–28 (AVFA…VVLA) and 41–61 (FSGA…NSFI).

Belongs to the PsbZ family. As to quaternary structure, PSII is composed of 1 copy each of membrane proteins PsbA, PsbB, PsbC, PsbD, PsbE, PsbF, PsbH, PsbI, PsbJ, PsbK, PsbL, PsbM, PsbT, PsbY, PsbZ, Psb30/Ycf12, at least 3 peripheral proteins of the oxygen-evolving complex and a large number of cofactors. It forms dimeric complexes.

The protein resides in the plastid. The protein localises to the chloroplast thylakoid membrane. Functionally, may control the interaction of photosystem II (PSII) cores with the light-harvesting antenna, regulates electron flow through the 2 photosystem reaction centers. PSII is a light-driven water plastoquinone oxidoreductase, using light energy to abstract electrons from H(2)O, generating a proton gradient subsequently used for ATP formation. The protein is Photosystem II reaction center protein Z of Anthoceros angustus (Hornwort).